The primary structure comprises 351 residues: Protein Wnt-2b-A (351 aa).

The N-terminal stretch at 1 to 16 (MHFAYILILLILTPRV) is a signal peptide. 11 disulfide bridges follow: C67–C78, C118–C126, C128–C148, C197–C211, C199–C206, C269–C300, C285–C295, C299–C339, C315–C330, C317–C327, and C322–C323. The N-linked (GlcNAc...) asparagine glycan is linked to N77. Residue S203 is the site of O-palmitoleoyl serine; by PORCN attachment.

It belongs to the Wnt family. Post-translationally, palmitoleoylation is required for efficient binding to frizzled receptors. Depalmitoleoylation leads to Wnt signaling pathway inhibition. As to expression, expressed maternally in both vegetal and animal blastomeres with enrichment in the animal hemisphere. Expressed zygotically near the prosencephalic-mesencephalic boundary of the developing brain in neurula and tailbud stages, and also in non-brain areas at tadpole stages.

It is found in the secreted. The protein resides in the extracellular space. Its subcellular location is the extracellular matrix. Ligand for members of the frizzled family of seven transmembrane receptors. Functions in the canonical Wnt/beta-catenin signaling pathway. This Xenopus laevis (African clawed frog) protein is Protein Wnt-2b-A (wnt2b-a).